A 220-amino-acid chain; its full sequence is Ribosomal RNA large subunit methyltransferase E (220 aa).

S-adenosyl-L-methionine is bound by residues Gly60, Trp62, Asp92, Asp108, and Asp133. Lys173 (proton acceptor) is an active-site residue. The interval 197–220 is disordered; that stretch reads RKPKASRDKSSETFILGRQLKQPR.

Belongs to the class I-like SAM-binding methyltransferase superfamily. RNA methyltransferase RlmE family.

Its subcellular location is the cytoplasm. It carries out the reaction uridine(2552) in 23S rRNA + S-adenosyl-L-methionine = 2'-O-methyluridine(2552) in 23S rRNA + S-adenosyl-L-homocysteine + H(+). In terms of biological role, specifically methylates the uridine in position 2552 of 23S rRNA at the 2'-O position of the ribose in the fully assembled 50S ribosomal subunit. The polypeptide is Ribosomal RNA large subunit methyltransferase E (Burkholderia ambifaria (strain MC40-6)).